A 618-amino-acid polypeptide reads, in one-letter code: Probable protein disulfide-isomerase A4 (618 aa).

Residues 1–21 (MMFDRRFFALVVLLCVSAVRS) form the signal peptide. Thioredoxin domains are found at residues 22–139 (TEDA…SRVD), 138–254 (VDPN…DQSK), and 480–609 (SSGK…KHGV). Intrachain disulfides connect Cys-65/Cys-68, Cys-176/Cys-179, and Cys-529/Cys-532. A Prevents secretion from ER motif is present at residues 615–618 (KDEL).

The protein belongs to the protein disulfide isomerase family.

It is found in the endoplasmic reticulum lumen. It catalyses the reaction Catalyzes the rearrangement of -S-S- bonds in proteins.. The protein is Probable protein disulfide-isomerase A4 of Caenorhabditis elegans.